The sequence spans 65 residues: Muscarinic m1-toxin2 (65 aa).

Intrachain disulfides connect Cys-3/Cys-24, Cys-17/Cys-42, Cys-46/Cys-57, and Cys-58/Cys-63.

Belongs to the three-finger toxin family. Short-chain subfamily. Aminergic toxin sub-subfamily. As to quaternary structure, monomer. In terms of tissue distribution, expressed by the venom gland.

It localises to the secreted. Its function is as follows. Binds irreversibly and specifically to M1 (CHRM1) muscarinic acetylcholine receptors, blocking further binding of antagonists and preventing the action of agonists. The sequence is that of Muscarinic m1-toxin2 from Dendroaspis angusticeps (Eastern green mamba).